Consider the following 256-residue polypeptide: Acetyl-coenzyme A carboxylase carboxyl transferase subunit alpha (256 aa).

The region spanning 1–236 (MTDVARILKE…KEHLKTEINQ (236 aa)) is the CoA carboxyltransferase C-terminal domain.

This sequence belongs to the AccA family. As to quaternary structure, acetyl-CoA carboxylase is a heterohexamer composed of biotin carboxyl carrier protein (AccB), biotin carboxylase (AccC) and two subunits each of ACCase subunit alpha (AccA) and ACCase subunit beta (AccD).

It localises to the cytoplasm. The enzyme catalyses N(6)-carboxybiotinyl-L-lysyl-[protein] + acetyl-CoA = N(6)-biotinyl-L-lysyl-[protein] + malonyl-CoA. The protein operates within lipid metabolism; malonyl-CoA biosynthesis; malonyl-CoA from acetyl-CoA: step 1/1. Functionally, component of the acetyl coenzyme A carboxylase (ACC) complex. First, biotin carboxylase catalyzes the carboxylation of biotin on its carrier protein (BCCP) and then the CO(2) group is transferred by the carboxyltransferase to acetyl-CoA to form malonyl-CoA. The polypeptide is Acetyl-coenzyme A carboxylase carboxyl transferase subunit alpha (Streptococcus uberis (strain ATCC BAA-854 / 0140J)).